A 264-amino-acid polypeptide reads, in one-letter code: MDKLVIAGKAYSSRLLVGTGKYRDFDETRTAVDASGAEIITVAIRRTNLGQNPEEPSLLDVLPPSEYTLLPNTAGCYTVEDAVRTLRLARELLDGHTLVKLEVLGDPKTLYPNIVETLKAAEILIKEGFQVMVYTSDDPIAARQLEEIGCVAIMPLASLIGSGMGILNPWNLQIIIENAKVPVIVDAGVGTASDAAIAMELGCDGVLMNTAIAAAQNPVLMASAMKKAVEAGREAYLAGRMPKKLYSASPSSPVEGVIGNMSGK.

The Schiff-base intermediate with DXP role is filled by Lys-100. 1-deoxy-D-xylulose 5-phosphate is bound by residues Gly-161, 187–188 (AG), and 209–210 (NT).

It belongs to the ThiG family. Homotetramer. Forms heterodimers with either ThiH or ThiS.

It localises to the cytoplasm. It carries out the reaction [ThiS sulfur-carrier protein]-C-terminal-Gly-aminoethanethioate + 2-iminoacetate + 1-deoxy-D-xylulose 5-phosphate = [ThiS sulfur-carrier protein]-C-terminal Gly-Gly + 2-[(2R,5Z)-2-carboxy-4-methylthiazol-5(2H)-ylidene]ethyl phosphate + 2 H2O + H(+). Its pathway is cofactor biosynthesis; thiamine diphosphate biosynthesis. Functionally, catalyzes the rearrangement of 1-deoxy-D-xylulose 5-phosphate (DXP) to produce the thiazole phosphate moiety of thiamine. Sulfur is provided by the thiocarboxylate moiety of the carrier protein ThiS. In vitro, sulfur can be provided by H(2)S. The polypeptide is Thiazole synthase (Nitrosospira multiformis (strain ATCC 25196 / NCIMB 11849 / C 71)).